Here is a 384-residue protein sequence, read N- to C-terminus: Galactokinase (384 aa).

35 to 38 (EHTD) is a substrate binding site. Residues serine 69 and 125–131 (GAGLSSS) contribute to the ATP site. 2 residues coordinate Mg(2+): serine 131 and glutamate 163. The Proton acceptor role is filled by aspartate 175. Tyrosine 224 contributes to the substrate binding site.

Belongs to the GHMP kinase family. GalK subfamily.

Its subcellular location is the cytoplasm. It carries out the reaction alpha-D-galactose + ATP = alpha-D-galactose 1-phosphate + ADP + H(+). It functions in the pathway carbohydrate metabolism; galactose metabolism. Catalyzes the transfer of the gamma-phosphate of ATP to D-galactose to form alpha-D-galactose-1-phosphate (Gal-1-P). This Aliivibrio fischeri (strain ATCC 700601 / ES114) (Vibrio fischeri) protein is Galactokinase.